A 599-amino-acid polypeptide reads, in one-letter code: MLSYLKQNLCFYLSSKILILALAISAIVSACTTFYVISLEAKNFSTIIGFLLIDLAIFLILGILLTQKFFSKNNDNDSSRLQNRIVIAFSLVAAIPTIIVSVFSVYFFNLSVKAWFDKKISTVLDQSVIVAETYIAEHKVQLKETALAVAEDLSDMYYDLIHNPALFTKTLNTEADMRSLDEAIVLNKSTNTIVANSYLSFSLSFATIPAHLIKKADLGEPVEVKSDPTKIRMLIKLKEYNDVYLLVGRLVDNKIIDHIDATNGAAAEYNSLKNEIDNIQIKFSIMFIFIALLLLFVAINFGVLFTAQIVKPIKKLVTATDKVKDGDLTVQVPENEVDKDEIGTLYVAFNRMIKQLSRQQRDLVIAQRAMAWSDVAKKVAHEIKNPLTPILLASERLLKKFSAEIKDKSEFESYLKMIIRHTNDIKNIVSEFVLFARLPAPKFTKSELVYLVKHIIEARKLLNDNIVYTCDSNVDQFDFMCDATQINQVMINVLKNAEESIEGQEFGRIDVILDIKDDFINVIVMDNGKGFPPELIGKATESYVTTSSKGMGVGLAIVKRIVEEHCGVLDIANREDKGAIIDIKFDLKELHLKVRRSCG.

Helical transmembrane passes span 17–37 (ILIL…FYVI), 44–64 (FSTI…LGIL), 85–105 (IVIA…VFSV), and 285–305 (IMFI…GVLF). The HAMP domain maps to 307-361 (AQIVKPIKKLVTATDKVKDGDLTVQVPENEVDKDEIGTLYVAFNRMIKQLSRQQR). A Histidine kinase domain is found at 378–589 (KVAHEIKNPL…IIDIKFDLKE (212 aa)). A Phosphohistidine; by autocatalysis modification is found at His-381.

It localises to the cell membrane. The enzyme catalyses ATP + protein L-histidine = ADP + protein N-phospho-L-histidine.. In terms of biological role, member of the two-component regulatory system RT0603/RT0550. The polypeptide is Putative sensor histidine kinase NtrY-like (Rickettsia typhi (strain ATCC VR-144 / Wilmington)).